A 468-amino-acid polypeptide reads, in one-letter code: Glutamate--tRNA ligase 2 (468 aa).

Positions 13–23 (PSPTGYLHIGG) match the 'HIGH' region motif. The 'KMSKS' region signature appears at 241 to 245 (KLSKR). ATP is bound at residue Lys244.

It belongs to the class-I aminoacyl-tRNA synthetase family. Glutamate--tRNA ligase type 1 subfamily. In terms of assembly, monomer.

Its subcellular location is the cytoplasm. It catalyses the reaction tRNA(Glu) + L-glutamate + ATP = L-glutamyl-tRNA(Glu) + AMP + diphosphate. Functionally, catalyzes the attachment of glutamate to tRNA(Glu) in a two-step reaction: glutamate is first activated by ATP to form Glu-AMP and then transferred to the acceptor end of tRNA(Glu). The protein is Glutamate--tRNA ligase 2 of Paracoccus denitrificans (strain Pd 1222).